Consider the following 240-residue polypeptide: Methylthioribulose-1-phosphate dehydratase (240 aa).

Cysteine 103 is a binding site for substrate. Zn(2+) is bound by residues histidine 121 and histidine 123. Glutamate 144 acts as the Proton donor/acceptor in catalysis. Residue histidine 200 participates in Zn(2+) binding.

Belongs to the aldolase class II family. MtnB subfamily. Zn(2+) is required as a cofactor.

The protein localises to the cytoplasm. It catalyses the reaction 5-(methylsulfanyl)-D-ribulose 1-phosphate = 5-methylsulfanyl-2,3-dioxopentyl phosphate + H2O. It functions in the pathway amino-acid biosynthesis; L-methionine biosynthesis via salvage pathway; L-methionine from S-methyl-5-thio-alpha-D-ribose 1-phosphate: step 2/6. Catalyzes the dehydration of methylthioribulose-1-phosphate (MTRu-1-P) into 2,3-diketo-5-methylthiopentyl-1-phosphate (DK-MTP-1-P). This is Methylthioribulose-1-phosphate dehydratase from Komagataella phaffii (strain GS115 / ATCC 20864) (Yeast).